A 170-amino-acid polypeptide reads, in one-letter code: NADH-quinone oxidoreductase subunit B (170 aa).

[4Fe-4S] cluster is bound by residues Cys37, Cys38, Cys102, and Cys131.

Belongs to the complex I 20 kDa subunit family. In terms of assembly, NDH-1 is composed of 14 different subunits. Subunits NuoB, C, D, E, F, and G constitute the peripheral sector of the complex. It depends on [4Fe-4S] cluster as a cofactor.

It localises to the cell inner membrane. The catalysed reaction is a quinone + NADH + 5 H(+)(in) = a quinol + NAD(+) + 4 H(+)(out). Its function is as follows. NDH-1 shuttles electrons from NADH, via FMN and iron-sulfur (Fe-S) centers, to quinones in the respiratory chain. The immediate electron acceptor for the enzyme in this species is believed to be ubiquinone. Couples the redox reaction to proton translocation (for every two electrons transferred, four hydrogen ions are translocated across the cytoplasmic membrane), and thus conserves the redox energy in a proton gradient. This chain is NADH-quinone oxidoreductase subunit B, found in Geobacter metallireducens (strain ATCC 53774 / DSM 7210 / GS-15).